A 364-amino-acid polypeptide reads, in one-letter code: GDP-perosamine synthase (364 aa).

K183 bears the N6-(pyridoxal phosphate)lysine mark.

This sequence belongs to the DegT/DnrJ/EryC1 family. Homodecamer. Requires pyridoxal 5'-phosphate as cofactor.

It carries out the reaction GDP-alpha-D-perosamine + 2-oxoglutarate = GDP-4-dehydro-alpha-D-rhamnose + L-glutamate. The protein operates within bacterial outer membrane biogenesis; LPS O-antigen biosynthesis. Divalent ions have no significant effect on activity. Catalyzes the synthesis of GDP-perosamine from GDP-4-keto-6-deoxy-D-mannose and L-glutamate. Can use only L-glutamate as amino donor. The sequence is that of GDP-perosamine synthase from Escherichia coli O157:H7.